The primary structure comprises 239 residues: Peroxygenase (239 aa).

At glycine 2 the chain carries N-acetylglycine. The EF-hand domain occupies 60 to 95 (HNMSVLQQRAAFFDRNNDGIVYPWETYQGFRAVGFG). Aspartate 73, asparagine 75, aspartate 77, and glutamate 84 together coordinate Ca(2+). Residues 116 to 125 (PSWIPSPVLS) carry the Proline-knot motif.

Belongs to the caleosin family. In terms of assembly, homodimer. It depends on heme b as a cofactor. The cofactor is Ca(2+). Expressed in pollen (at protein level). Not expressed in leaf, root, stem, tepal, ovary, style, filament or stigma (at protein level).

Its subcellular location is the lipid droplet. It localises to the microsome membrane. The enzyme catalyses RH + ROOH = ROH + ROH.. Calcium-binding peroxygenase involved in the degradation of storage lipid in oil bodies. The sequence is that of Peroxygenase from Lilium longiflorum (Trumpet lily).